The chain runs to 107 residues: uncharacterized protein (107 aa).

The next 4 membrane-spanning stretches (helical) occupy residues Phe-9–Glu-28, Ser-33–Ile-50, Leu-55–Val-72, and Tyr-77–Gly-99.

It is found in the cell membrane. This is an uncharacterized protein from Archaeoglobus fulgidus (strain ATCC 49558 / DSM 4304 / JCM 9628 / NBRC 100126 / VC-16).